We begin with the raw amino-acid sequence, 297 residues long: Formylmethanofuran--tetrahydromethanopterin formyltransferase (297 aa).

This sequence belongs to the FTR family. As to quaternary structure, homotetramer.

The protein localises to the cytoplasm. It carries out the reaction N-formylmethanofuran + 5,6,7,8-tetrahydromethanopterin + H(+) = N(5)-formyl-5,6,7,8-tetrahydromethanopterin + methanofuran. The protein operates within metabolic intermediate metabolism; lactate oxidation. Catalyzes the transfer of a formyl group from 5-formyl tetrahydromethanopterin (5-formyl-H(4)MPT) to methanofuran (MFR) to produce formylmethanofuran (formyl-MFR) and tetrahydromethanopterin (H(4)MPT). This Archaeoglobus fulgidus (strain ATCC 49558 / DSM 4304 / JCM 9628 / NBRC 100126 / VC-16) protein is Formylmethanofuran--tetrahydromethanopterin formyltransferase.